Consider the following 264-residue polypeptide: Acetylglutamate kinase (264 aa).

Residues 40–41, R62, and N158 each bind substrate; that span reads GG.

Belongs to the acetylglutamate kinase family. ArgB subfamily.

The protein localises to the cytoplasm. It catalyses the reaction N-acetyl-L-glutamate + ATP = N-acetyl-L-glutamyl 5-phosphate + ADP. It participates in amino-acid biosynthesis; L-arginine biosynthesis; N(2)-acetyl-L-ornithine from L-glutamate: step 2/4. Catalyzes the ATP-dependent phosphorylation of N-acetyl-L-glutamate. The polypeptide is Acetylglutamate kinase (Cytophaga hutchinsonii (strain ATCC 33406 / DSM 1761 / CIP 103989 / NBRC 15051 / NCIMB 9469 / D465)).